The primary structure comprises 181 residues: UPF0177 protein YbdI (181 aa).

Transmembrane regions (helical) follow at residues 10-30 (ILFL…GVFA), 41-61 (LLWL…AHYL), 81-101 (FVDS…IAPI), 114-134 (FFSH…LIHT), and 161-181 (SDSI…HIII).

This sequence belongs to the UPF0177 family.

The protein localises to the cell membrane. The sequence is that of UPF0177 protein YbdI (ybdI) from Lactococcus lactis subsp. lactis (strain IL1403) (Streptococcus lactis).